A 194-amino-acid polypeptide reads, in one-letter code: UPF0215 protein Mbar_A0619 (194 aa).

It belongs to the UPF0215 family.

The polypeptide is UPF0215 protein Mbar_A0619 (Methanosarcina barkeri (strain Fusaro / DSM 804)).